Consider the following 492-residue polypeptide: MKTNPLVFVVSTAVEKNAGYITQIIGPVLDVAFSPGKLPNIYNSLIVKGQNPAGQEINVTCEVQQLLGNDRVRAVAMSATDGLMRGMKVIDTGAPLSVPVGEVTLGRIFNVLGEPVDNLGPVDAGTTSPIHKSAPAFTQLDTKLSIFETGIKVVDLSAPYRRGGKIGLFGGAGVGKTVLIMELINNIAKAHGGVSVFGGVGERTREGNDLYMEMKESKVINQENISESKVALVYGQMNEPPGARMRVGLTALTMAEYFRDVNKQDVLLFIDNIFRFVQAGSEVSASSGRMPSAVGYQPTLATEMGSLQERITSTKEGSITSIQAVYVPADDLTDPAPATTFAHSDATTVLSRGLAAKGIYPAVDPLDSTSTMLQPWIVGEEHYETAQGVKQTLQRYKELQDIIAILGLDELSEEDRLTVARARKIERFLSQPFFVAEVFTGSPGKYVSLIETIKGFQMILSGELDSLPEQAFYLVGNIDEATAKAATLQVES.

Gly-170–Thr-177 is a binding site for ATP.

Belongs to the ATPase alpha/beta chains family. As to quaternary structure, F-type ATPases have 2 components, CF(1) - the catalytic core - and CF(0) - the membrane proton channel. CF(1) has five subunits: alpha(3), beta(3), gamma(1), delta(1), epsilon(1). CF(0) has four main subunits: a(1), b(1), b'(1) and c(9-12).

It localises to the plastid. Its subcellular location is the chloroplast thylakoid membrane. The enzyme catalyses ATP + H2O + 4 H(+)(in) = ADP + phosphate + 5 H(+)(out). In terms of biological role, produces ATP from ADP in the presence of a proton gradient across the membrane. The catalytic sites are hosted primarily by the beta subunits. The polypeptide is ATP synthase subunit beta, chloroplastic (Angiopteris evecta (Mule's foot fern)).